The primary structure comprises 215 residues: Ceramide-1-phosphate transfer protein (215 aa).

An N-acylsphingoid base 1-phosphate is bound by residues D57, K61, R107, R111, and H151.

Belongs to the GLTP family.

It is found in the cytoplasm. It localises to the cytosol. Its subcellular location is the golgi apparatus. The protein resides in the trans-Golgi network membrane. The protein localises to the cell membrane. It is found in the endosome membrane. It localises to the nucleus outer membrane. It catalyses the reaction N-(hexadecanoyl)-sphing-4-enine-1-phosphate(in) = N-(hexadecanoyl)-sphing-4-enine-1-phosphate(out). It carries out the reaction N-(9Z-octadecenoyl)-sphing-4-enine-1-phosphate(in) = N-(9Z-octadecenoyl)-sphing-4-enine-1-phosphate(out). Functionally, mediates the intracellular transfer of ceramide-1-phosphate (C1P) between organelle membranes and the cell membrane. Required for normal structure of the Golgi stacks. Can bind phosphoceramides with a variety of aliphatic chains, but has a preference for lipids with saturated C16:0 or monounsaturated C18:1 aliphatic chains, and is inefficient with phosphoceramides containing lignoceryl (C24:0). Plays a role in the regulation of the cellular levels of ceramide-1-phosphate, and thereby contributes to the regulation of phospholipase PLA2G4A activity and the release of arachidonic acid. Has no activity with galactosylceramide, lactosylceramide, sphingomyelin, phosphatidylcholine, phosphatidic acid and ceramide. C1P transfer is stimulated by phosphatidylserine in C1P source vesicles. Regulates autophagy and pyroptosis, but not apoptosis. This chain is Ceramide-1-phosphate transfer protein (cptp), found in Xenopus tropicalis (Western clawed frog).